The following is a 232-amino-acid chain: 5'-methylthioadenosine/S-adenosylhomocysteine nucleosidase (232 aa).

The active-site Proton acceptor is Glu12. Residues Gly78, Ile152, and 173–174 each bind substrate; that span reads ME. The active-site Proton donor is the Asp197.

It belongs to the PNP/UDP phosphorylase family. MtnN subfamily. In terms of assembly, homodimer.

It carries out the reaction S-adenosyl-L-homocysteine + H2O = S-(5-deoxy-D-ribos-5-yl)-L-homocysteine + adenine. The enzyme catalyses S-methyl-5'-thioadenosine + H2O = 5-(methylsulfanyl)-D-ribose + adenine. The catalysed reaction is 5'-deoxyadenosine + H2O = 5-deoxy-D-ribose + adenine. The protein operates within amino-acid biosynthesis; L-methionine biosynthesis via salvage pathway; S-methyl-5-thio-alpha-D-ribose 1-phosphate from S-methyl-5'-thioadenosine (hydrolase route): step 1/2. Functionally, catalyzes the irreversible cleavage of the glycosidic bond in both 5'-methylthioadenosine (MTA) and S-adenosylhomocysteine (SAH/AdoHcy) to adenine and the corresponding thioribose, 5'-methylthioribose and S-ribosylhomocysteine, respectively. Also cleaves 5'-deoxyadenosine, a toxic by-product of radical S-adenosylmethionine (SAM) enzymes, into 5-deoxyribose and adenine. Thus, is required for in vivo function of the radical SAM enzymes biotin synthase and lipoic acid synthase, that are inhibited by 5'-deoxyadenosine accumulation. This chain is 5'-methylthioadenosine/S-adenosylhomocysteine nucleosidase, found in Salmonella dublin (strain CT_02021853).